Reading from the N-terminus, the 241-residue chain is Probable 2-phosphosulfolactate phosphatase (241 aa).

Belongs to the ComB family. Requires Mg(2+) as cofactor.

The catalysed reaction is (2R)-O-phospho-3-sulfolactate + H2O = (2R)-3-sulfolactate + phosphate. The protein is Probable 2-phosphosulfolactate phosphatase of Gloeothece citriformis (strain PCC 7424) (Cyanothece sp. (strain PCC 7424)).